Consider the following 263-residue polypeptide: 3-deoxy-manno-octulosonate cytidylyltransferase 1 (263 aa).

Belongs to the KdsB family.

It is found in the cytoplasm. The catalysed reaction is 3-deoxy-alpha-D-manno-oct-2-ulosonate + CTP = CMP-3-deoxy-beta-D-manno-octulosonate + diphosphate. It functions in the pathway nucleotide-sugar biosynthesis; CMP-3-deoxy-D-manno-octulosonate biosynthesis; CMP-3-deoxy-D-manno-octulosonate from 3-deoxy-D-manno-octulosonate and CTP: step 1/1. It participates in bacterial outer membrane biogenesis; lipopolysaccharide biosynthesis. Activates KDO (a required 8-carbon sugar) for incorporation into bacterial lipopolysaccharide in Gram-negative bacteria. The sequence is that of 3-deoxy-manno-octulosonate cytidylyltransferase 1 from Burkholderia ambifaria (strain MC40-6).